Here is a 335-residue protein sequence, read N- to C-terminus: MAPNVEDMESDLPESEEKLEKLVAPQAAPRKYQIIYTNLLTFGYWHIAGLYGLYLCFTSAKWQTIILALILNEMAILGITAGAHRLWAHRSYKATVPLQIILIIFNSLSFQNSAIHWIRDHRMHHKYSDTDGDPHNASRGFFYSHVGWLLVKKHPEVKKRAKTIDMSDIYSNPILRFQKKYAIPFIGMICFVLPTIIPMYFWGETLSNAWHITMLRYVFSLNSIFLVNSAAHLYGYRPYDKNILPAENKMTFIACLGENFHNYHHVFPWDYRASELGNIGMNWTAKFIDFFAWIGWAYDLKTASDENIKSRMKRTGDGTDVSGQKYSCESSEVLQ.

Helical transmembrane passes span 39–59 (LLTF…CFTS), 64–84 (TIIL…AGAH), and 98–118 (LQII…IHWI). The Histidine box-1 motif lies at 84-89 (HRLWAH). The Histidine box-2 signature appears at 121-125 (HRMHH). A run of 2 helical transmembrane segments spans residues 182 to 202 (AIPF…MYFW) and 213 to 235 (TMLR…HLYG). The Histidine box-3 motif lies at 261–265 (HNYHH). Residues 312 to 335 (MKRTGDGTDVSGQKYSCESSEVLQ) form a disordered region. Residues 321–335 (VSGQKYSCESSEVLQ) are compositionally biased toward polar residues.

The protein belongs to the fatty acid desaturase type 1 family. Requires Fe cation as cofactor. In terms of tissue distribution, detected in pheromone gland.

The protein resides in the membrane. It catalyses the reaction an 11,12-saturated fatty acyl-CoA + 2 Fe(II)-[cytochrome b5] + O2 + 2 H(+) = an (11Z)-Delta(11)-fatty acyl-CoA + 2 Fe(III)-[cytochrome b5] + 2 H2O. In terms of biological role, catalyzes the formation of Delta(11) fatty acyl precursors in the pheromone gland, with a preference for myristic acid. The protein is Acyl-CoA Delta(11) desaturase of Choristoneura rosaceana (Oblique banded leafroller).